Consider the following 185-residue polypeptide: Large ribosomal subunit protein bL25 (185 aa).

Belongs to the bacterial ribosomal protein bL25 family. CTC subfamily. Part of the 50S ribosomal subunit; part of the 5S rRNA/L5/L18/L25 subcomplex. Contacts the 5S rRNA. Binds to the 5S rRNA independently of L5 and L18.

Its function is as follows. This is one of the proteins that binds to the 5S RNA in the ribosome where it forms part of the central protuberance. The sequence is that of Large ribosomal subunit protein bL25 from Chlamydia caviae (strain ATCC VR-813 / DSM 19441 / 03DC25 / GPIC) (Chlamydophila caviae).